Consider the following 190-residue polypeptide: Small ribosomal subunit protein uS5 (190 aa).

One can recognise an S5 DRBM domain in the interval 22–85 (FVDKLVHINR…DSAKRNLTRV (64 aa)).

The protein belongs to the universal ribosomal protein uS5 family. Part of the 30S ribosomal subunit. Contacts proteins S4 and S8.

In terms of biological role, with S4 and S12 plays an important role in translational accuracy. Located at the back of the 30S subunit body where it stabilizes the conformation of the head with respect to the body. This chain is Small ribosomal subunit protein uS5, found in Bradyrhizobium sp. (strain BTAi1 / ATCC BAA-1182).